The following is a 338-amino-acid chain: Glycerol-3-phosphate dehydrogenase [NAD(P)+] (338 aa).

NADPH-binding residues include Trp14, Tyr50, and Lys110. Sn-glycerol 3-phosphate-binding residues include Lys110, Gly141, and Ser143. Ala145 provides a ligand contact to NADPH. The sn-glycerol 3-phosphate site is built by Lys196, Asp249, Ser259, Arg260, and Asn261. Catalysis depends on Lys196, which acts as the Proton acceptor. Arg260 serves as a coordination point for NADPH. An NADPH-binding site is contributed by Glu285.

This sequence belongs to the NAD-dependent glycerol-3-phosphate dehydrogenase family.

The protein resides in the cytoplasm. The enzyme catalyses sn-glycerol 3-phosphate + NAD(+) = dihydroxyacetone phosphate + NADH + H(+). It catalyses the reaction sn-glycerol 3-phosphate + NADP(+) = dihydroxyacetone phosphate + NADPH + H(+). Its pathway is membrane lipid metabolism; glycerophospholipid metabolism. Its function is as follows. Catalyzes the reduction of the glycolytic intermediate dihydroxyacetone phosphate (DHAP) to sn-glycerol 3-phosphate (G3P), the key precursor for phospholipid synthesis. In Malacoplasma penetrans (strain HF-2) (Mycoplasma penetrans), this protein is Glycerol-3-phosphate dehydrogenase [NAD(P)+].